Consider the following 378-residue polypeptide: Cytochrome b (378 aa).

Helical transmembrane passes span 33–53, 77–98, 113–133, and 178–198; these read SGSL…FLSM, WLIR…YFHI, XNVG…GYVL, and FFAF…IHLI. Heme b-binding residues include His83 and His97. His196 contributes to the heme b binding site. Residue His201 coordinates a ubiquinone. 4 consecutive transmembrane segments (helical) span residues 226–246, 288–308, 320–340, and 347–367; these read FKDL…ALFS, LGGV…PILH, LTQF…WIGG, and FIII…VLFP.

Belongs to the cytochrome b family. As to quaternary structure, the cytochrome bc1 complex contains 3 respiratory subunits (MT-CYB, CYC1 and UQCRFS1), 2 core proteins (UQCRC1 and UQCRC2) and probably 6 low-molecular weight proteins. The cofactor is heme b.

It is found in the mitochondrion inner membrane. Functionally, component of the ubiquinol-cytochrome c reductase complex (complex III or cytochrome b-c1 complex) that is part of the mitochondrial respiratory chain. The b-c1 complex mediates electron transfer from ubiquinol to cytochrome c. Contributes to the generation of a proton gradient across the mitochondrial membrane that is then used for ATP synthesis. In Nannacara anomala (Goldeneye cichlid), this protein is Cytochrome b (mt-cyb).